Here is a 247-residue protein sequence, read N- to C-terminus: Sugar fermentation stimulation protein homolog (247 aa).

It belongs to the SfsA family.

The chain is Sugar fermentation stimulation protein homolog from Aeromonas salmonicida (strain A449).